Reading from the N-terminus, the 300-residue chain is GTPase Era (300 aa).

The 169-residue stretch at 4–172 folds into the Era-type G domain; sequence KSGFVALIGR…LEKIKKLLPE (169 aa). The interval 12–19 is G1; the sequence is GRPNVGKS. 12-19 is a binding site for GTP; the sequence is GRPNVGKS. Residues 38 to 42 form a G2 region; the sequence is QTTRN. A G3 region spans residues 59–62; that stretch reads DTPG. GTP-binding positions include 59–63 and 122–125; these read DTPGV and NKAD. Residues 122-125 are G4; that stretch reads NKAD. The tract at residues 151–153 is G5; the sequence is IAA. The KH type-2 domain occupies 195–281; the sequence is IREKILLNLS…NLQLWVKVKK (87 aa).

This sequence belongs to the TRAFAC class TrmE-Era-EngA-EngB-Septin-like GTPase superfamily. Era GTPase family. In terms of assembly, monomer.

It is found in the cytoplasm. It localises to the cell membrane. An essential GTPase that binds both GDP and GTP, with rapid nucleotide exchange. Plays a role in 16S rRNA processing and 30S ribosomal subunit biogenesis and possibly also in cell cycle regulation and energy metabolism. The chain is GTPase Era from Caldicellulosiruptor saccharolyticus (strain ATCC 43494 / DSM 8903 / Tp8T 6331).